A 389-amino-acid polypeptide reads, in one-letter code: Phosphoglycerate kinase (389 aa).

Substrate contacts are provided by residues 19–21 (DYN), R34, 57–60 (HLGR), R117, and R150. ATP-binding positions include K200, G288, E319, and 347–350 (GGDS).

It belongs to the phosphoglycerate kinase family. In terms of assembly, monomer.

It localises to the cytoplasm. The catalysed reaction is (2R)-3-phosphoglycerate + ATP = (2R)-3-phospho-glyceroyl phosphate + ADP. It participates in carbohydrate degradation; glycolysis; pyruvate from D-glyceraldehyde 3-phosphate: step 2/5. The protein is Phosphoglycerate kinase of Deinococcus geothermalis (strain DSM 11300 / CIP 105573 / AG-3a).